The following is a 317-amino-acid chain: WSCD family member AAEL009094 (317 aa).

A helical transmembrane segment spans residues 8–28 (LFGLAGTILVYIGGILFLSFV). 3 N-linked (GlcNAc...) asparagine glycosylation sites follow: N150, N226, and N232.

Belongs to the WSCD family.

The protein localises to the membrane. The chain is WSCD family member AAEL009094 from Aedes aegypti (Yellowfever mosquito).